Reading from the N-terminus, the 259-residue chain is Merozoite surface protein CMZ-8 (259 aa).

Positions 1–108 (PLPFSPPSTP…STPVSPPSSP (108 aa)) are enriched in pro residues. Disordered stretches follow at residues 1–127 (PLPF…STSE) and 174–203 (RPGS…RHKG). Repeat copies occupy residues 5–11 (SPPSTPV), 12–18 (SPPSTPV), 19–25 (SPPSTPV), 26–32 (SPPSTPV), 33–39 (SPPSTPV), 40–46 (SPPSTPV), 47–53 (SPPSTPV), 54–60 (SPPSTPV), 61–67 (SPPSTPV), 68–74 (SPPSTPV), 75–81 (SPPSTPV), 82–88 (SPPSTPV), 89–95 (SPPSTPV), 96–102 (SPPSTPV), and 103–109 (SPPSSPA). The tract at residues 5–109 (SPPSTPVSPP…TPVSPPSSPA (105 aa)) is 15 X 7 AA repeats of S-P-P-S-T-P-V. Residues 184-203 (HCTRSTRSSRRMSRRHRHKG) show a composition bias toward basic residues.

The chain is Merozoite surface protein CMZ-8 from Eimeria acervulina (Coccidian parasite).